The chain runs to 133 residues: 14 kDa fatty acid-binding protein (133 aa).

(5Z,8Z,11Z,14Z)-eicosatetraenoate is bound by residues Arg107 and 127 to 129 (RNY). Residues Arg107 and 127–129 (RNY) each bind (9Z)-octadecenoate.

It belongs to the calycin superfamily. Fatty-acid binding protein (FABP) family. In terms of tissue distribution, tubercles, muscle layers and body.

Its subcellular location is the cytoplasm. In terms of biological role, may play a role in the transport of fatty acids. Binds various fatty acids, such as arachidonic, oleic, palmitic and linolenic acid (in vitro). The chain is 14 kDa fatty acid-binding protein from Schistosoma mansoni (Blood fluke).